The chain runs to 424 residues: Glutamate-1-semialdehyde 2,1-aminomutase (424 aa).

Lys-263 carries the post-translational modification N6-(pyridoxal phosphate)lysine.

The protein belongs to the class-III pyridoxal-phosphate-dependent aminotransferase family. HemL subfamily. In terms of assembly, homodimer. Requires pyridoxal 5'-phosphate as cofactor.

The protein resides in the cytoplasm. The catalysed reaction is (S)-4-amino-5-oxopentanoate = 5-aminolevulinate. Its pathway is porphyrin-containing compound metabolism; protoporphyrin-IX biosynthesis; 5-aminolevulinate from L-glutamyl-tRNA(Glu): step 2/2. The polypeptide is Glutamate-1-semialdehyde 2,1-aminomutase (Campylobacter jejuni (strain RM1221)).